Reading from the N-terminus, the 588-residue chain is MIQHPRIGIRPTIDGRRQGVRESLEVQTMNMAKSVADLISSTLKYPDGEPVECVISPSTIGRVPEAAASHELFKKSNVCATITVTPCWCYGSETMDMSPDIPHAIWGFNGTERPGAVYLAAVLASHAQKGIPAFGIYGRDVQEASDTDIPEDVKEKLLRYARAALATGLMRDTAYLSMGSVSMGIGGSIVNPDFFQEYLGMRNESVDMTEFTRRMDRGIYDPEEFERALKWVKENVKEGFDHNREDLVLSREEKDRQWEFVIKMFMIGRDLMVGNPRLAELGFEEEAVGHHALVAGFQGQRQWTDHFPNGDFMETFLNTQFDWNGIRKPFVFATENDSLNGVSMLFNYLLTNTPQIFADVRTYWSPEAVKRVTGHTLEGRAAAGFLHLINSGSCTLDGTGQATRDGKPIMKPFWELEESEVQAMLENTDFPPANREYFRGGGFSTRFLTKGDMPVTMVRLNLLKGVGPVLQIAEGYTLELPEDVHHTLDNRTDPGWPTTWFAPRLTGKGAFKSVYDVMNNWGANHGAITYGHIGADLITLASMLRIPVNMHNVPEEDIFRPKNWSLFGTEDLESADYRACQLLGPLHK.

Catalysis depends on proton acceptor residues Glu-335 and Asp-359. Mn(2+) contacts are provided by Glu-335, Asp-359, and His-525.

It belongs to the L-fucose isomerase family. Requires Mn(2+) as cofactor.

It localises to the cytoplasm. The enzyme catalyses L-fucose = L-fuculose. It functions in the pathway carbohydrate degradation; L-fucose degradation; L-lactaldehyde and glycerone phosphate from L-fucose: step 1/3. In terms of biological role, converts the aldose L-fucose into the corresponding ketose L-fuculose. The chain is L-fucose isomerase from Streptococcus pneumoniae serotype 4 (strain ATCC BAA-334 / TIGR4).